The chain runs to 435 residues: MSGFLEELLGEKLVTGGGEEVDVHSLGARGISLLGLYFGCSLSAPCAQLSASLAAFYGRLRGDAAAGPGPGAGAGAAAEPEPRRRLEIVFVSSDQDQRQWQDFVRDMPWLALPYKEKHRKLKLWNKYRISNIPSLIFLDATTGKVVCRNGLLVIRDDPEGLEFPWGPKPFREVIAGPLLRNNGQSLESSSLEGSHVGVYFSAHWCPPCRSLTRVLVESYRKIKEAGQNFEIIFVSADRSEESFKQYFSEMPWLAVPYTDEARRSRLNRLYGIQGIPTLIMLDPQGEVITRQGRVEVLNDEDCREFPWHPKPVLELSDSNAAQLNEGPCLVLFVDSEDDGESEAAKQLIQPIAEKIIAKYKAKEEEAPLLFFVAGEDDMTDSLRDYTNLPEAAPLLTILDMSARAKYVMDVEEITPAIVEAFVNDFLAEKLKPEPI.

An N-acetylserine modification is found at Ser-2. In terms of domain architecture, Thioredoxin spans 167–321 (PKPFREVIAG…VLELSDSNAA (155 aa)).

It belongs to the nucleoredoxin family. Associates with the phosphatase 2A holoenzyme. Interacts with PPP2CA; the interaction is direct. Interacts with DVL1 (via PDZ domain); the interaction is direct and regulated by oxidative stress.

It localises to the cytoplasm. Its subcellular location is the cytosol. The protein localises to the nucleus. It carries out the reaction [protein]-dithiol + NAD(+) = [protein]-disulfide + NADH + H(+). The enzyme catalyses [protein]-dithiol + NADP(+) = [protein]-disulfide + NADPH + H(+). In terms of biological role, functions as a redox-dependent negative regulator of the Wnt signaling pathway, possibly by preventing ubiquitination of DVL3 by the BCR(KLHL12) complex. May also function as a transcriptional regulator act as a regulator of protein phosphatase 2A (PP2A). This is Nucleoredoxin (NXN) from Homo sapiens (Human).